Here is a 477-residue protein sequence, read N- to C-terminus: Putative multidrug resistance protein MdtD (477 aa).

The next 14 helical transmembrane spans lie at 13–33 (LWIV…VNTA), 50–70 (SVIV…GWLA), 73–93 (VGVQ…SILC), 107–127 (VVQG…VMKI), 139–159 (FVTL…GFLV), 166–186 (WIFL…LLLM), 196–216 (FDIS…LALD), 220–240 (GMGL…AALA), 268–288 (LTAS…TPLF), 291–311 (VGMG…IIGS), 326–348 (GYRN…FPLV), 352–374 (GWIW…RFSA), 394–414 (LLSM…GILI), and 432–452 (AFIY…LAFA).

This sequence belongs to the major facilitator superfamily. TCR/Tet family.

Its subcellular location is the cell inner membrane. The protein is Putative multidrug resistance protein MdtD of Serratia proteamaculans (strain 568).